Here is a 173-residue protein sequence, read N- to C-terminus: NADH-ubiquinone oxidoreductase chain 6 (173 aa).

Helical transmembrane passes span 12–32 (VFWL…VSLV), 47–67 (GSFL…VIFA), 94–114 (VVLA…GECG), and 142–162 (GALM…LVLV).

The protein belongs to the complex I subunit 6 family.

Its subcellular location is the mitochondrion membrane. The enzyme catalyses a ubiquinone + NADH + 5 H(+)(in) = a ubiquinol + NAD(+) + 4 H(+)(out). Its function is as follows. Core subunit of the mitochondrial membrane respiratory chain NADH dehydrogenase (Complex I) that is believed to belong to the minimal assembly required for catalysis. Complex I functions in the transfer of electrons from NADH to the respiratory chain. The immediate electron acceptor for the enzyme is believed to be ubiquinone. This is NADH-ubiquinone oxidoreductase chain 6 (MT-ND6) from Pelomedusa subrufa (African side-necked turtle).